Here is a 690-residue protein sequence, read N- to C-terminus: Eukaryotic translation initiation factor 3 subunit B (690 aa).

The span at Met1 to Gly11 shows a compositional bias: basic and acidic residues. The segment at Met1–Ser36 is disordered. Acidic residues predominate over residues Asn15–Phe25. One can recognise an RRM domain in the interval Ser57–Asp141. 5 WD repeats span residues Thr207–Lys246, Gly292–Leu331, Ile334–Glu369, Glu442–Leu484, and Pro530–Thr575. The stretch at Gln614–Arg645 forms a coiled coil.

Belongs to the eIF-3 subunit B family. In terms of assembly, component of the eukaryotic translation initiation factor 3 (eIF-3) complex. The eIF-3 complex interacts with pix. Interacts with mxt.

The protein resides in the cytoplasm. Its function is as follows. RNA-binding component of the eukaryotic translation initiation factor 3 (eIF-3) complex, which is involved in protein synthesis of a specialized repertoire of mRNAs and, together with other initiation factors, stimulates binding of mRNA and methionyl-tRNAi to the 40S ribosome. The eIF-3 complex specifically targets and initiates translation of a subset of mRNAs involved in cell proliferation. This chain is Eukaryotic translation initiation factor 3 subunit B, found in Drosophila virilis (Fruit fly).